We begin with the raw amino-acid sequence, 402 residues long: Alanine racemase (402 aa).

Residue K34 is the Proton acceptor; specific for D-alanine of the active site. An N6-(pyridoxal phosphate)lysine modification is found at K34. R133 serves as a coordination point for substrate. The 46-residue stretch at 226 to 271 (EVSYNLSYKEKFERNTPALATTVCINKCADVNTRLTYKVPLKGSYR) folds into the RPE1 insert domain. Y296 serves as the catalytic Proton acceptor; specific for L-alanine. M344 contributes to the substrate binding site.

The protein belongs to the alanine racemase family. It depends on pyridoxal 5'-phosphate as a cofactor.

It catalyses the reaction L-alanine = D-alanine. It participates in amino-acid biosynthesis; D-alanine biosynthesis; D-alanine from L-alanine: step 1/1. Functionally, catalyzes the interconversion of L-alanine and D-alanine. May also act on other amino acids. This chain is Alanine racemase (alr), found in Rickettsia typhi (strain ATCC VR-144 / Wilmington).